Reading from the N-terminus, the 343-residue chain is Probable dual-specificity RNA methyltransferase RlmN (343 aa).

The active-site Proton acceptor is the Glu-91. Residues 97-326 form the Radical SAM core domain; that stretch reads HPDRITACIS…AEIRREKGSD (230 aa). An intrachain disulfide couples Cys-104 to Cys-331. [4Fe-4S] cluster-binding residues include Cys-111, Cys-115, and Cys-118. S-adenosyl-L-methionine-binding positions include 158–159, Ser-190, 213–215, and Asn-289; these read GE and SLH. The active-site S-methylcysteine intermediate is Cys-331.

It belongs to the radical SAM superfamily. RlmN family. It depends on [4Fe-4S] cluster as a cofactor.

It is found in the cytoplasm. The enzyme catalyses adenosine(2503) in 23S rRNA + 2 reduced [2Fe-2S]-[ferredoxin] + 2 S-adenosyl-L-methionine = 2-methyladenosine(2503) in 23S rRNA + 5'-deoxyadenosine + L-methionine + 2 oxidized [2Fe-2S]-[ferredoxin] + S-adenosyl-L-homocysteine. It carries out the reaction adenosine(37) in tRNA + 2 reduced [2Fe-2S]-[ferredoxin] + 2 S-adenosyl-L-methionine = 2-methyladenosine(37) in tRNA + 5'-deoxyadenosine + L-methionine + 2 oxidized [2Fe-2S]-[ferredoxin] + S-adenosyl-L-homocysteine. In terms of biological role, specifically methylates position 2 of adenine 2503 in 23S rRNA and position 2 of adenine 37 in tRNAs. The protein is Probable dual-specificity RNA methyltransferase RlmN of Thermotoga sp. (strain RQ2).